The following is a 352-amino-acid chain: Keratocan (352 aa).

The signal sequence occupies residues 1–20 (MAGTICFIMWVLFITDTVWS). One can recognise an LRRNT domain in the interval 33–71 (DDWTIHDFECPMECFCPPSFPTALYCENRGLKEIPAIPS). Intrachain disulfides connect C42–C48 and C46–C58. LRR repeat units lie at residues 72–93 (RIWY…PFEN), 96–117 (QLRW…KGAL), 122–142 (KLLF…PLPR), 143–164 (SLEQ…TFSN), 167–180 (NLTL…KLVD), 193–213 (NLMQ…RLPA), 214–235 (NTMQ…YFNV), 238–258 (KVAF…PSRG), 263–282 (SILD…RISA), and 283–304 (HLQH…VICP). N-linked (GlcNAc...) (keratan sulfate) asparagine glycosylation occurs at N93. An N-linked (GlcNAc...) (keratan sulfate) asparagine glycan is attached at N167. N222 is a glycosylation site (N-linked (GlcNAc...) asparagine). An N-linked (GlcNAc...) asparagine glycan is attached at N298. The cysteines at positions 303 and 343 are disulfide-linked.

This sequence belongs to the small leucine-rich proteoglycan (SLRP) family. SLRP class II subfamily. Binds keratan sulfate chains. Cornea (at protein level). Increased expression in the stroma of keratoconus corneas. Also detected in trachea, and in low levels, in intestine, skeletal muscle, ovary, lung and putamen.

Its subcellular location is the secreted. It is found in the extracellular space. The protein resides in the extracellular matrix. May be important in developing and maintaining corneal transparency and for the structure of the stromal matrix. The sequence is that of Keratocan (KERA) from Homo sapiens (Human).